Here is a 691-residue protein sequence, read N- to C-terminus: Elongation factor G (691 aa).

Residues 8–282 enclose the tr-type G domain; sequence ERVRNIGIAA…AVVDYLPAPV (275 aa). GTP-binding positions include 17 to 24, 81 to 85, and 135 to 138; these read AHIDAGKT, DTPGH, and NKMD.

Belongs to the TRAFAC class translation factor GTPase superfamily. Classic translation factor GTPase family. EF-G/EF-2 subfamily.

The protein localises to the cytoplasm. In terms of biological role, catalyzes the GTP-dependent ribosomal translocation step during translation elongation. During this step, the ribosome changes from the pre-translocational (PRE) to the post-translocational (POST) state as the newly formed A-site-bound peptidyl-tRNA and P-site-bound deacylated tRNA move to the P and E sites, respectively. Catalyzes the coordinated movement of the two tRNA molecules, the mRNA and conformational changes in the ribosome. In Prochlorococcus marinus (strain MIT 9515), this protein is Elongation factor G.